The following is a 689-amino-acid chain: Glycine--tRNA ligase beta subunit (689 aa).

The protein belongs to the class-II aminoacyl-tRNA synthetase family. In terms of assembly, tetramer of two alpha and two beta subunits.

It is found in the cytoplasm. The catalysed reaction is tRNA(Gly) + glycine + ATP = glycyl-tRNA(Gly) + AMP + diphosphate. This Shewanella woodyi (strain ATCC 51908 / MS32) protein is Glycine--tRNA ligase beta subunit.